A 253-amino-acid polypeptide reads, in one-letter code: Histone-arginine methyltransferase METTL23 (253 aa).

Residues Met-1–Thr-23 form a disordered region.

It belongs to the methyltransferase superfamily. METTL23 family. Interacts with HSPA5, HSP90B1, TUBULIN, UGGT1 and UGGT2. Interacts with TET3. Interacts with STPG4. Ubiquitously expressed.

The protein localises to the nucleus. Its subcellular location is the cytoplasm. The catalysed reaction is L-arginyl-[protein] + 2 S-adenosyl-L-methionine = N(omega),N(omega)-dimethyl-L-arginyl-[protein] + 2 S-adenosyl-L-homocysteine + 2 H(+). Its function is as follows. Histone methyltransferase that dimethylates histone H3 at 'Arg-17', forming asymmetric dimethylarginine (H3R17me2a), leading to activate transcription via chromatin remodeling. Maternal factor involved in epigenetic chromatin reprogramming of the paternal genome in the zygote: mediates H3R17me2a, promoting histone H3.3 incorporation in the male pronucleus, leading to TET3 recruitment and subsequent DNA demethylation. This chain is Histone-arginine methyltransferase METTL23, found in Mus musculus (Mouse).